Reading from the N-terminus, the 362-residue chain is Chalcone synthase A (362 aa).

Cysteine 168 is a catalytic residue.

It belongs to the thiolase-like superfamily. Chalcone/stilbene synthases family.

It catalyses the reaction (E)-4-coumaroyl-CoA + 3 malonyl-CoA + 3 H(+) = 2',4,4',6'-tetrahydroxychalcone + 3 CO2 + 4 CoA. It functions in the pathway secondary metabolite biosynthesis; flavonoid biosynthesis. In terms of biological role, the primary product of this enzyme is 4,2',4',6'-tetrahydroxychalcone (also termed naringenin-chalcone or chalcone) which can under specific conditions spontaneously isomerize into naringenin. The sequence is that of Chalcone synthase A (CHSA) from Ipomoea triloba (Trilobed morning glory).